We begin with the raw amino-acid sequence, 525 residues long: 2,3-bisphosphoglycerate-independent phosphoglycerate mutase (525 aa).

Mn(2+) contacts are provided by Asp18 and Ser68. Ser68 acts as the Phosphoserine intermediate in catalysis. Substrate is bound by residues His129, 159 to 160, Arg194, Arg200, 269 to 272, and Lys345; these read RD and RADR. Residues Asp413, His417, Asp454, His455, and His473 each contribute to the Mn(2+) site.

It belongs to the BPG-independent phosphoglycerate mutase family. As to quaternary structure, monomer. It depends on Mn(2+) as a cofactor.

It catalyses the reaction (2R)-2-phosphoglycerate = (2R)-3-phosphoglycerate. The protein operates within carbohydrate degradation; glycolysis; pyruvate from D-glyceraldehyde 3-phosphate: step 3/5. Catalyzes the interconversion of 2-phosphoglycerate and 3-phosphoglycerate. The chain is 2,3-bisphosphoglycerate-independent phosphoglycerate mutase from Chromohalobacter salexigens (strain ATCC BAA-138 / DSM 3043 / CIP 106854 / NCIMB 13768 / 1H11).